The following is a 288-amino-acid chain: Pyridoxal kinase PdxY (288 aa).

Substrate contacts are provided by residues S9 and 44–45; that span reads TQ. Residues D111, E148, and K181 each coordinate ATP. D224 contacts substrate.

It belongs to the pyridoxine kinase family. PdxY subfamily. As to quaternary structure, homodimer. It depends on Mg(2+) as a cofactor.

It catalyses the reaction pyridoxal + ATP = pyridoxal 5'-phosphate + ADP + H(+). Its pathway is cofactor metabolism; pyridoxal 5'-phosphate salvage; pyridoxal 5'-phosphate from pyridoxal: step 1/1. Functionally, pyridoxal kinase involved in the salvage pathway of pyridoxal 5'-phosphate (PLP). Catalyzes the phosphorylation of pyridoxal to PLP. In Haemophilus influenzae (strain ATCC 51907 / DSM 11121 / KW20 / Rd), this protein is Pyridoxal kinase PdxY.